The primary structure comprises 168 residues: Avenin-like a1 (168 aa).

A signal peptide spans methionine 1 to alanine 19.

The protein belongs to the prolamin family. In terms of processing, contains 7 disulfide bonds.

Seed storage protein. Not integrated in the gluten polymer through disulfide bonds, unless incorporated by reduction and reoxidation during dough making. Increases dough strength and bread volume, but decreases dough stability when added into a base wheat flour. This is Avenin-like a1 (AVNLA) from Triticum aestivum (Wheat).